Reading from the N-terminus, the 732-residue chain is Photosystem I P700 chlorophyll a apoprotein A2 (732 aa).

The next 8 membrane-spanning stretches (helical) occupy residues 46 to 69, 133 to 156, 173 to 197, 271 to 289, 328 to 351, 367 to 393, 415 to 437, and 515 to 533; these read IFASHFGHLAIIFLWTSGNLFHVA, LYTGALGLLVLSAVFLLAGWLHIQ, LNHHLAGLFGVSSLAWTGHLVHVAI, MAHHHLAIAVIFIVAGHMY, LHFQLGLALASLSVVTSLVAQHMY, SALYTHHQYIAGLLIVGAFAHGAIFFI, AVISHLSWVSLFLGFHTLGLYVH, and FLVHHAIALGLHTTTLILV. Residues Cys-557 and Cys-566 each contribute to the [4Fe-4S] cluster site. Transmembrane regions (helical) follow at residues 573–594 and 641–663; these read AFYLAMFWMLNTIGWVTFYWHW and LAVWSWMFLFAHLVWATGFMFLI. Residues His-652, Met-660, and Tyr-668 each coordinate chlorophyll a. Position 669 (Trp-669) interacts with phylloquinone. Residues 705 to 725 traverse the membrane as a helical segment; it reads LVGLVHFTVGYILTYAAFVIA.

The protein belongs to the PsaA/PsaB family. As to quaternary structure, the PsaA/B heterodimer binds the P700 chlorophyll special pair and subsequent electron acceptors. PSI consists of a core antenna complex that captures photons, and an electron transfer chain that converts photonic excitation into a charge separation. The eukaryotic PSI reaction center is composed of at least 11 subunits. The cofactor is P700 is a chlorophyll a/chlorophyll a' dimer, A0 is one or more chlorophyll a, A1 is one or both phylloquinones and FX is a shared 4Fe-4S iron-sulfur center..

It is found in the plastid. Its subcellular location is the chloroplast thylakoid membrane. It carries out the reaction reduced [plastocyanin] + hnu + oxidized [2Fe-2S]-[ferredoxin] = oxidized [plastocyanin] + reduced [2Fe-2S]-[ferredoxin]. Functionally, psaA and PsaB bind P700, the primary electron donor of photosystem I (PSI), as well as the electron acceptors A0, A1 and FX. PSI is a plastocyanin/cytochrome c6-ferredoxin oxidoreductase, converting photonic excitation into a charge separation, which transfers an electron from the donor P700 chlorophyll pair to the spectroscopically characterized acceptors A0, A1, FX, FA and FB in turn. Oxidized P700 is reduced on the lumenal side of the thylakoid membrane by plastocyanin or cytochrome c6. The sequence is that of Photosystem I P700 chlorophyll a apoprotein A2 from Cyanidioschyzon merolae (strain NIES-3377 / 10D) (Unicellular red alga).